Reading from the N-terminus, the 345-residue chain is Dimethyladenosine transferase 1, mitochondrial (345 aa).

The transit peptide at 1–27 (MAASGKLGTFRLPPLPTIREIIKLFGL) directs the protein to the mitochondrion. S-adenosyl-L-methionine contacts are provided by L38, G63, E85, K86, D111, V112, and N141.

It belongs to the class I-like SAM-binding methyltransferase superfamily. rRNA adenine N(6)-methyltransferase family. KsgA subfamily. Interacts with mitochondrial RNA polymerase POLRMT. Interacts with TFAM. Remains bound to the maturing mtSSU until the late stages of assembly. Ubiquitously expressed.

The protein localises to the mitochondrion. It carries out the reaction adenosine(N)/adenosine(N+1) in rRNA + 4 S-adenosyl-L-methionine = N(6)-dimethyladenosine(N)/N(6)-dimethyladenosine(N+1) in rRNA + 4 S-adenosyl-L-homocysteine + 4 H(+). Its function is as follows. Mitochondrial methyltransferase which uses S-adenosyl methionine to dimethylate two highly conserved adjacent adenosine residues (A1006 and A1007) within the loop of helix 45 at the 3-prime end of 12S rRNA, thereby regulating the assembly or stability of the small subunit of the mitochondrial ribosome. Also required for basal transcription of mitochondrial DNA, probably via its interaction with POLRMT and TFAM. Stimulates transcription independently of the methyltransferase activity. This Mus musculus (Mouse) protein is Dimethyladenosine transferase 1, mitochondrial (Tfb1m).